A 124-amino-acid polypeptide reads, in one-letter code: 5-hydroxyisourate hydrolase (124 aa).

Histidine 15, arginine 53, and tyrosine 121 together coordinate substrate.

Belongs to the transthyretin family. 5-hydroxyisourate hydrolase subfamily. As to quaternary structure, homotetramer.

It carries out the reaction 5-hydroxyisourate + H2O = 5-hydroxy-2-oxo-4-ureido-2,5-dihydro-1H-imidazole-5-carboxylate + H(+). Its function is as follows. Catalyzes the hydrolysis of 5-hydroxyisourate (HIU) to 2-oxo-4-hydroxy-4-carboxy-5-ureidoimidazoline (OHCU). This Mesorhizobium japonicum (strain LMG 29417 / CECT 9101 / MAFF 303099) (Mesorhizobium loti (strain MAFF 303099)) protein is 5-hydroxyisourate hydrolase.